Here is a 786-residue protein sequence, read N- to C-terminus: ATP-dependent RNA helicase SUPV3L1, mitochondrial (786 aa).

A mitochondrion-targeting transit peptide spans M1–A22. Residue K99 is modified to N6-acetyllysine. One can recognise a Helicase ATP-binding domain in the interval D194–Y334. An ATP-binding site is contributed by G207–T214. At K220 the chain carries N6-acetyllysine. The 166-residue stretch at V353–E518 folds into the Helicase C-terminal domain. An interaction with LAMTOR5, important for protein stability region spans residues P650–D786. Disordered regions lie at residues G690–E730 and K749–D786. Over residues S693 to S705 the composition is skewed to polar residues. S725 is modified (phosphoserine). Positions K749–T771 are enriched in basic and acidic residues.

Belongs to the helicase family. As to quaternary structure, homodimer; in free form. Component of the mitochondrial degradosome (mtEXO) complex which is a heteropentamer containing 2 copies of SUPV3L1 and 3 copies of PNPT1. As part of mitochondrial degradosome complex, interacts with GRSF1 in a RNA-dependent manner; the interaction enhances the activity of the complex. Interacts with LAMTOR5/HBXIP, WRN and BLM. Mg(2+) serves as cofactor. Mn(2+) is required as a cofactor. Broadly expressed.

The protein localises to the nucleus. It localises to the mitochondrion matrix. It is found in the mitochondrion nucleoid. The enzyme catalyses ATP + H2O = ADP + phosphate + H(+). Its activity is regulated as follows. Helicase activity toward DNA substrate is inhibited by micromolar concentrations of 5,6-dichloro-1-(beta-D-ribofuranosyl)benzotriazole (DRBT) and 4,5,6,7-tetrabromobenzotriazole (TBBT). Helicase activity toward RNA substrate is inhibited by elevated concentrations of TBBT. Inhibited by some ring-expanded nucleoside analogs. In terms of biological role, major helicase player in mitochondrial RNA metabolism. Component of the mitochondrial degradosome (mtEXO) complex, that degrades 3' overhang double-stranded RNA with a 3'-to-5' directionality in an ATP-dependent manner. Involved in the degradation of non-coding mitochondrial transcripts (MT-ncRNA) and tRNA-like molecules. ATPase and ATP-dependent multisubstrate helicase, able to unwind double-stranded (ds) DNA and RNA, and RNA/DNA heteroduplexes in the 5'-to-3' direction. Plays a role in the RNA surveillance system in mitochondria; regulates the stability of mature mRNAs, the removal of aberrantly formed mRNAs and the rapid degradation of non coding processing intermediates. Also implicated in recombination and chromatin maintenance pathways. May protect cells from apoptosis. Associates with mitochondrial DNA. This Homo sapiens (Human) protein is ATP-dependent RNA helicase SUPV3L1, mitochondrial (SUPV3L1).